The primary structure comprises 347 residues: UDP-N-acetylenolpyruvoylglucosamine reductase (347 aa).

The FAD-binding PCMH-type domain occupies 33–221; the sequence is AGGSAERIYL…SGAWFALPRD (189 aa). Arginine 180 is an active-site residue. Serine 250 acts as the Proton donor in catalysis. Glutamate 320 is an active-site residue.

The protein belongs to the MurB family. It depends on FAD as a cofactor.

It localises to the cytoplasm. It catalyses the reaction UDP-N-acetyl-alpha-D-muramate + NADP(+) = UDP-N-acetyl-3-O-(1-carboxyvinyl)-alpha-D-glucosamine + NADPH + H(+). It functions in the pathway cell wall biogenesis; peptidoglycan biosynthesis. Its function is as follows. Cell wall formation. The polypeptide is UDP-N-acetylenolpyruvoylglucosamine reductase (Nitrosospira multiformis (strain ATCC 25196 / NCIMB 11849 / C 71)).